We begin with the raw amino-acid sequence, 397 residues long: UDP-galactose translocator (397 aa).

Positions 1-21 (MAAVGSGGSNAAAGPGAVSAG) are disordered. The next 10 membrane-spanning stretches (helical) occupy residues 3–23 (AVGS…AGSL), 37–57 (YISL…IRYA), 65–85 (FFAT…CLLL), 97–117 (LALF…KLAV), 140–160 (TFQV…VLML), 169–189 (WASL…QAGG), 200–220 (GAGL…GVYF), 238–258 (LGLF…GTAV), 269–289 (PAVW…AVVV), and 315–335 (LFGF…IGAV). Over residues 9–21 (SNAAAGPGAVSAG) the composition is skewed to low complexity. The disordered stretch occupies residues 355 to 397 (ASASTSGPCTHQQPPGQPPPPKLSSHRADLSTEPFLPKSVLVK).

This sequence belongs to the nucleotide-sugar transporter family. SLC35A subfamily. Interacts with SLC35A3; the interaction is reduced in the presence of SLC35A4. Found in a complex with SLC35A3 and SLC35A4.

It localises to the golgi apparatus membrane. It carries out the reaction UMP(out) + UDP-alpha-D-galactose(in) = UMP(in) + UDP-alpha-D-galactose(out). The enzyme catalyses UDP-N-acetyl-alpha-D-galactosamine(in) + UMP(out) = UDP-N-acetyl-alpha-D-galactosamine(out) + UMP(in). It catalyses the reaction UMP(out) + UDP-alpha-D-glucose(in) = UMP(in) + UDP-alpha-D-glucose(out). The catalysed reaction is UMP(out) + UDP-N-acetyl-alpha-D-glucosamine(in) = UMP(in) + UDP-N-acetyl-alpha-D-glucosamine(out). It carries out the reaction UDP-alpha-D-galactose(in) + AMP(out) = UDP-alpha-D-galactose(out) + AMP(in). The enzyme catalyses UDP-alpha-D-galactose(in) + CMP(out) = UDP-alpha-D-galactose(out) + CMP(in). It catalyses the reaction UDP-N-acetyl-alpha-D-galactosamine(out) + UDP-alpha-D-galactose(in) = UDP-N-acetyl-alpha-D-galactosamine(in) + UDP-alpha-D-galactose(out). The catalysed reaction is UDP-N-acetyl-alpha-D-glucosamine(out) + UDP-alpha-D-galactose(in) = UDP-N-acetyl-alpha-D-glucosamine(in) + UDP-alpha-D-galactose(out). It carries out the reaction UDP-alpha-D-galactose(in) + UDP-alpha-D-glucose(out) = UDP-alpha-D-galactose(out) + UDP-alpha-D-glucose(in). The enzyme catalyses UMP(out) + CMP(in) = UMP(in) + CMP(out). It catalyses the reaction UMP(out) + AMP(in) = UMP(in) + AMP(out). Its function is as follows. Transports uridine diphosphate galactose (UDP-galactose) from the cytosol into the Golgi apparatus, functioning as an antiporter that exchanges UDP-galactose for UMP. It is also able to exchange UDP-galactose for AMP and CMP, and to transport UDP-N-acetylgalactosamine (UDP-GalNAc) and other nucleotide sugars. As a provider of UDP-galactose to galactosyltransferases present in the Golgi apparatus, it is necessary for globotriaosylceramide/globoside (Gb3Cer) synthesis from lactosylceramide. The polypeptide is UDP-galactose translocator (Canis lupus familiaris (Dog)).